Consider the following 589-residue polypeptide: Peptide transporter PTR_A (589 aa).

Residues 1–56 form a disordered region; it reads MSETKPAANDLSNVPSASDSDKDNSLDKVHSLEKTGVHEDINKLPSSDLEQLEDDG. The span at 19 to 42 shows a compositional bias: basic and acidic residues; it reads DSDKDNSLDKVHSLEKTGVHEDIN. The next 4 helical transmembrane spans lie at 74–95, 124–144, 153–173, and 180–200; these read IPLS…YYGL, ALSY…AWIA, AICI…ITSI, and NTSL…TGGV. N-linked (GlcNAc...) asparagine glycosylation occurs at asparagine 233. 8 helical membrane passes run 236-256, 266-286, 345-365, 388-408, 420-440, 467-487, 502-522, and 533-553; these read IQNV…SVIA, FWAG…VLLL, VYAC…GQMI, INAI…YPFI, IFWG…LQHF, IAIQ…ASIT, SFIM…GIAL, and WTYT…YIIF.

This sequence belongs to the major facilitator superfamily. Proton-dependent oligopeptide transporter (POT/PTR) (TC 2.A.17) family.

It is found in the cell membrane. It carries out the reaction a dipeptide(out) + H(+)(out) = a dipeptide(in) + H(+)(in). The enzyme catalyses an L-amino acid tripeptide(out) + H(+)(out) = an L-amino acid tripeptide(in) + H(+)(in). Peptide transporter that exploits the inwardly directed proton motive force to facilitate the cellular uptake of di/tripeptides. In Candidozyma auris (Yeast), this protein is Peptide transporter PTR_A.